We begin with the raw amino-acid sequence, 412 residues long: Protein png-1 (412 aa).

4 residues coordinate Zn(2+): Cys150, Cys153, Cys182, and Cys185. The segment at 363–412 is disordered; sequence AAAARGGRSSPDNKSGANMMGSPATGDIKRPIPEDAPVPDVPSLWPTYGP.

Belongs to the transglutaminase-like superfamily. PNGase family.

This chain is Protein png-1 (un-7), found in Neurospora crassa (strain ATCC 24698 / 74-OR23-1A / CBS 708.71 / DSM 1257 / FGSC 987).